Here is a 91-residue protein sequence, read N- to C-terminus: MSRTVFCHYQQSDAEGLDFVPYPGELGQRIFAQIGKNAWQAWLAHQTMLINENRLSPRDPKHRAFLEAELQKFLFERNADKPEGYVAPVGD.

This sequence belongs to the Fe(2+)-trafficking protein family.

In terms of biological role, could be a mediator in iron transactions between iron acquisition and iron-requiring processes, such as synthesis and/or repair of Fe-S clusters in biosynthetic enzymes. The sequence is that of Probable Fe(2+)-trafficking protein from Xanthomonas axonopodis pv. citri (strain 306).